Consider the following 205-residue polypeptide: Large ribosomal subunit protein uL3 (205 aa).

The tract at residues 126–150 is disordered; sequence GGPKTHGQSDRHRAPGSIGSTTTPG.

Belongs to the universal ribosomal protein uL3 family. Part of the 50S ribosomal subunit. Forms a cluster with proteins L14 and L19.

Functionally, one of the primary rRNA binding proteins, it binds directly near the 3'-end of the 23S rRNA, where it nucleates assembly of the 50S subunit. In Dehalococcoides mccartyi (strain ATCC BAA-2100 / JCM 16839 / KCTC 5957 / BAV1), this protein is Large ribosomal subunit protein uL3.